Consider the following 365-residue polypeptide: UDP-N-acetylglucosamine--N-acetylmuramyl-(pentapeptide) pyrophosphoryl-undecaprenol N-acetylglucosamine transferase (365 aa).

UDP-N-acetyl-alpha-D-glucosamine contacts are provided by residues 19–21 (TGG), Asn131, Arg170, Ser201, Ile255, 274–279 (ALTVTE), and Gln300.

It belongs to the glycosyltransferase 28 family. MurG subfamily.

It is found in the cell inner membrane. It catalyses the reaction di-trans,octa-cis-undecaprenyl diphospho-N-acetyl-alpha-D-muramoyl-L-alanyl-D-glutamyl-meso-2,6-diaminopimeloyl-D-alanyl-D-alanine + UDP-N-acetyl-alpha-D-glucosamine = di-trans,octa-cis-undecaprenyl diphospho-[N-acetyl-alpha-D-glucosaminyl-(1-&gt;4)]-N-acetyl-alpha-D-muramoyl-L-alanyl-D-glutamyl-meso-2,6-diaminopimeloyl-D-alanyl-D-alanine + UDP + H(+). It functions in the pathway cell wall biogenesis; peptidoglycan biosynthesis. Its function is as follows. Cell wall formation. Catalyzes the transfer of a GlcNAc subunit on undecaprenyl-pyrophosphoryl-MurNAc-pentapeptide (lipid intermediate I) to form undecaprenyl-pyrophosphoryl-MurNAc-(pentapeptide)GlcNAc (lipid intermediate II). The protein is UDP-N-acetylglucosamine--N-acetylmuramyl-(pentapeptide) pyrophosphoryl-undecaprenol N-acetylglucosamine transferase of Acinetobacter baylyi (strain ATCC 33305 / BD413 / ADP1).